Consider the following 875-residue polypeptide: Phosphoenolpyruvate carboxylase (875 aa).

Catalysis depends on residues H137 and K542.

This sequence belongs to the PEPCase type 1 family. Mg(2+) serves as cofactor.

The catalysed reaction is oxaloacetate + phosphate = phosphoenolpyruvate + hydrogencarbonate. In terms of biological role, forms oxaloacetate, a four-carbon dicarboxylic acid source for the tricarboxylic acid cycle. The polypeptide is Phosphoenolpyruvate carboxylase (Pseudomonas entomophila (strain L48)).